Reading from the N-terminus, the 266-residue chain is Glucosamine-6-phosphate deaminase (266 aa).

Asp-72 serves as the catalytic Proton acceptor; for enolization step. Asp-141 serves as the catalytic For ring-opening step. His-143 (proton acceptor; for ring-opening step) is an active-site residue. Glu-148 (for ring-opening step) is an active-site residue.

This sequence belongs to the glucosamine/galactosamine-6-phosphate isomerase family. NagB subfamily. In terms of assembly, homohexamer.

The catalysed reaction is alpha-D-glucosamine 6-phosphate + H2O = beta-D-fructose 6-phosphate + NH4(+). It participates in amino-sugar metabolism; N-acetylneuraminate degradation; D-fructose 6-phosphate from N-acetylneuraminate: step 5/5. Its activity is regulated as follows. Allosterically activated by N-acetylglucosamine 6-phosphate (GlcNAc6P). In terms of biological role, catalyzes the reversible isomerization-deamination of glucosamine 6-phosphate (GlcN6P) to form fructose 6-phosphate (Fru6P) and ammonium ion. This Aliivibrio fischeri (strain ATCC 700601 / ES114) (Vibrio fischeri) protein is Glucosamine-6-phosphate deaminase.